The primary structure comprises 265 residues: Regulator of calcineurin 2 (265 aa).

A phosphoserine mark is found at S104 and S110. Disordered stretches follow at residues 127-213 (LLSI…DKSA) and 242-265 (ENDV…EFFH). Position 132 is a phosphothreonine (T132). Low complexity-rich tracts occupy residues 141–161 (SSSL…LESP) and 182–202 (LSRS…QTSL). S152, S157, S160, S183, S187, S193, S201, and S255 each carry phosphoserine.

Post-translationally, phosphorylation of Ser-152 and Ser-160 is induced 2-fold in response to mating pheromone.

It is found in the cytoplasm. In Saccharomyces cerevisiae (strain ATCC 204508 / S288c) (Baker's yeast), this protein is Regulator of calcineurin 2 (RCN2).